Reading from the N-terminus, the 543-residue chain is CTP synthase (543 aa).

The amidoligase domain stretch occupies residues Met-1–Leu-265. Residue Ser-13 participates in CTP binding. UTP is bound at residue Ser-13. Residues Ser-14 to Ile-19 and Asp-71 each bind ATP. Residues Asp-71 and Glu-139 each coordinate Mg(2+). CTP is bound by residues Asp-146–Glu-148, Lys-186–Gln-191, and Lys-222. UTP is bound by residues Lys-186 to Gln-191 and Lys-222. The Glutamine amidotransferase type-1 domain maps to Thr-290–Lys-541. Gly-351 contacts L-glutamine. Cys-378 (nucleophile; for glutamine hydrolysis) is an active-site residue. L-glutamine contacts are provided by residues Leu-379–Gln-382, Glu-402, and Arg-469. Active-site residues include His-514 and Glu-516.

It belongs to the CTP synthase family. As to quaternary structure, homotetramer.

The enzyme catalyses UTP + L-glutamine + ATP + H2O = CTP + L-glutamate + ADP + phosphate + 2 H(+). It catalyses the reaction L-glutamine + H2O = L-glutamate + NH4(+). It carries out the reaction UTP + NH4(+) + ATP = CTP + ADP + phosphate + 2 H(+). It functions in the pathway pyrimidine metabolism; CTP biosynthesis via de novo pathway; CTP from UDP: step 2/2. With respect to regulation, allosterically activated by GTP, when glutamine is the substrate; GTP has no effect on the reaction when ammonia is the substrate. The allosteric effector GTP functions by stabilizing the protein conformation that binds the tetrahedral intermediate(s) formed during glutamine hydrolysis. Inhibited by the product CTP, via allosteric rather than competitive inhibition. Its function is as follows. Catalyzes the ATP-dependent amination of UTP to CTP with either L-glutamine or ammonia as the source of nitrogen. Regulates intracellular CTP levels through interactions with the four ribonucleotide triphosphates. The polypeptide is CTP synthase (Pseudomonas syringae pv. tomato (strain ATCC BAA-871 / DC3000)).